A 250-amino-acid chain; its full sequence is N-acyl homoserine lactonase (250 aa).

7 residues coordinate Zn(2+): histidine 104, histidine 106, aspartate 108, histidine 109, histidine 169, aspartate 191, and histidine 235.

Belongs to the metallo-beta-lactamase superfamily. Monomer. Zn(2+) is required as a cofactor.

It carries out the reaction an N-acyl-L-homoserine lactone + H2O = an N-acyl-L-homoserine + H(+). Its activity is regulated as follows. Completely inhibited by Cu(2+) and Ag(+). Partially inhibited by Cr(2+), Pb(2+) and Fe(2+). Mg(2+), Ca(2+), Mn(2+), Co(2+), Ni(2+), Zn(2+) and Cd(2+) have no effect on activity. The chelating agents EDTA, 2,2'bipyridine and o-phenanthroline have no effect on enzyme activity. In terms of biological role, hydrolyzes acyl homoserine lactones with varying lengths of acyl chains, with a slight preference for substrates without 3-oxo substitution at the C3 position. Has only residual activity towards non-acyl lactones, and no activity towards non-cyclic esters. The sequence is that of N-acyl homoserine lactonase from Bacillus sp.